The sequence spans 245 residues: 1-(5-phosphoribosyl)-5-[(5-phosphoribosylamino)methylideneamino] imidazole-4-carboxamide isomerase (245 aa).

The active-site Proton acceptor is Asp-7. Catalysis depends on Asp-129, which acts as the Proton donor.

The protein belongs to the HisA/HisF family.

It is found in the cytoplasm. The catalysed reaction is 1-(5-phospho-beta-D-ribosyl)-5-[(5-phospho-beta-D-ribosylamino)methylideneamino]imidazole-4-carboxamide = 5-[(5-phospho-1-deoxy-D-ribulos-1-ylimino)methylamino]-1-(5-phospho-beta-D-ribosyl)imidazole-4-carboxamide. It participates in amino-acid biosynthesis; L-histidine biosynthesis; L-histidine from 5-phospho-alpha-D-ribose 1-diphosphate: step 4/9. The protein is 1-(5-phosphoribosyl)-5-[(5-phosphoribosylamino)methylideneamino] imidazole-4-carboxamide isomerase of Buchnera aphidicola subsp. Cinara cedri (strain Cc).